The primary structure comprises 316 residues: MSDNRVYSYSAVLMGSPILLKLYSHDEALASRVFQLIKRYEDLLTVNRAESQVMDINHAAGRHPVTVSRPVFQLIQCAKAASMVRDSAFNLAIGPLVKLWRIGFHGHSVPDAADIRARLALTRPQEVILDETTCSVFLQQPGMELDLGAIAKGYIADRVRDYLRQQQVEKALINLGGNVHTLGEWTIGLKKPFADAQALIGSLTINGQSVVTSGTYERYFEQDGKRWHHILDPRSGYPLDNELDSVTVISTDSLDGDIWTTLLFGLGVEKGCAALRQREDIDAIFVTKNRDIILSSPQRLRFSPLDSGYQVIDCTA.

Residues Met-14, 88–90, and Asp-146 contribute to the FAD site; that span reads AFN. Ala-149 is a binding site for Mg(2+). Positions 152 and 231 each coordinate FAD. Mg(2+) is bound by residues Asp-257 and Thr-261.

The protein belongs to the ApbE family. Mg(2+) serves as cofactor.

Its subcellular location is the cytoplasm. It carries out the reaction L-threonyl-[protein] + FAD = FMN-L-threonyl-[protein] + AMP + H(+). In terms of biological role, flavin transferase that catalyzes the transfer of the FMN moiety of FAD and its covalent binding to the hydroxyl group of a threonine residue in a target flavoprotein. Is responsible for the modification of the fumarate reductase KPK_2907. The chain is FAD:protein FMN transferase from Klebsiella pneumoniae (strain 342).